The primary structure comprises 436 residues: uncharacterized protein (436 aa).

This is an uncharacterized protein from Arabidopsis thaliana (Mouse-ear cress).